Here is a 1155-residue protein sequence, read N- to C-terminus: RhoGEF domain-containing protein gxcJ (1155 aa).

Disordered stretches follow at residues 114–216 (ENNS…NFLK), 259–333 (LNKK…IPSN), 429–460 (LVSQSPPPPQPPFLASASSSSTTTITTTDSLE), 484–508 (LNNESAASSSSLSTTTTTTTTTTTT), and 604–639 (SNSNSSNNNNSNSNNITNSNSSSFSKKNSNNNNNYQ). Low complexity-rich tracts occupy residues 115–153 (NNSINDNNNNNNNNNNNNNNNNNNNNNNNNNNNNNTNNN), 161–211 (TITN…NNNN), and 260–303 (NKKS…NNNN). The stretch at 192-257 (NNNNNNNNNN…KDIEKLNSAL (66 aa)) forms a coiled coil. The segment covering 304-319 (YKPTITSSQTQPSLME) has biased composition (polar residues). Residues 320–330 (NSKDIDKKEKI) are compositionally biased toward basic and acidic residues. A compositionally biased stretch (low complexity) spans 441–457 (FLASASSSSTTTITTTD). The span at 604-637 (SNSNSSNNNNSNSNNITNSNSSSFSKKNSNNNNN) shows a compositional bias: low complexity. In terms of domain architecture, DH spans 700 to 874 (HRTNLIKEIL…EKIVGTINSQ (175 aa)). The tract at residues 1084 to 1155 (SHRLSIPSTS…LVKSLVNIKT (72 aa)) is disordered. 2 stretches are compositionally biased toward low complexity: residues 1093 to 1121 (SSPNNGASLNGNSSSNSSSTSISTVGSPN) and 1128 to 1137 (QQQQLQQQQQ).

Its function is as follows. GTPase-activating protein. This Dictyostelium discoideum (Social amoeba) protein is RhoGEF domain-containing protein gxcJ (gxcJ).